Reading from the N-terminus, the 450-residue chain is Protein tweety homolog 1 (450 aa).

Residues 1-43 (MGAPPGYRPSAWVHLLHQLPRADFQLRPVPSAFAPQEREYQQA) are Extracellular-facing. A helical transmembrane segment spans residues 44–64 (LLLVAALAGLGLGLSLIFIAV). Topologically, residues 65 to 88 (YLIRFCCCRPPEPPGAKSPPPGGG) are cytoplasmic. The helical transmembrane segment at 89 to 109 (CVTWNCIAALLVGCAGIGVGF) threads the bilayer. The Extracellular portion of the chain corresponds to 110–214 (YGNSETSDGV…DVSFVEEYRW (105 aa)). Asparagine 130 carries an N-linked (GlcNAc...) asparagine glycan. The chain crosses the membrane as a helical span at residues 215-235 (LAYVLLLLLELLVCLFTLLGL). Over 236 to 240 (ARQSK) the chain is Cytoplasmic. Residues 241–261 (WLVIVMTVMSLLVLVLSWGSM) traverse the membrane as a helical segment. Topologically, residues 262 to 390 (GLEAATAVGL…LRGLCEDTLE (129 aa)) are extracellular. Disulfide bonds link cysteine 275–cysteine 385 and cysteine 303–cysteine 370. N-linked (GlcNAc...) asparagine glycosylation is found at asparagine 284 and asparagine 355. Residues 391-411 (GLLFLLLFSLLSAGALATVLC) form a helical membrane-spanning segment. Residues 412 to 450 (SLPRAWALFPPSDDYEDTDDDDPFNPQESKRFVQWQSSI) lie on the Cytoplasmic side of the membrane. The interval 427–450 (EDTDDDDPFNPQESKRFVQWQSSI) is disordered. Serine 440 bears the Phosphoserine mark.

Belongs to the tweety family. In terms of assembly, homotetramer; disulfide-linked. Homodimer. Post-translationally, N-glycosylated. Contains high-mannose, hybrid and complex oligosaccharides.

The protein resides in the cell membrane. It carries out the reaction chloride(in) = chloride(out). It catalyses the reaction L-glutamate(out) = L-glutamate(in). Functionally, calcium-independent, swelling-dependent volume-regulated anion channel (VRAC-swell) which plays a pivotal role in the process of regulatory volume decrease (RVD) in the brain through the efflux of anions like chloride and organic osmolytes like glutamate. The chain is Protein tweety homolog 1 (TTYH1) from Bos taurus (Bovine).